The following is a 209-amino-acid chain: Uracil phosphoribosyltransferase (209 aa).

5-phospho-alpha-D-ribose 1-diphosphate is bound by residues Arg79, Arg104, and 131 to 139 (DPMLATGGS). Residues Ile194 and 199 to 201 (GDA) each bind uracil. Asp200 serves as a coordination point for 5-phospho-alpha-D-ribose 1-diphosphate.

This sequence belongs to the UPRTase family. Mg(2+) serves as cofactor.

It carries out the reaction UMP + diphosphate = 5-phospho-alpha-D-ribose 1-diphosphate + uracil. Its pathway is pyrimidine metabolism; UMP biosynthesis via salvage pathway; UMP from uracil: step 1/1. Its activity is regulated as follows. Allosterically activated by GTP. In terms of biological role, catalyzes the conversion of uracil and 5-phospho-alpha-D-ribose 1-diphosphate (PRPP) to UMP and diphosphate. This is Uracil phosphoribosyltransferase from Lacticaseibacillus paracasei (strain ATCC 334 / BCRC 17002 / CCUG 31169 / CIP 107868 / KCTC 3260 / NRRL B-441) (Lactobacillus paracasei).